Here is a 158-residue protein sequence, read N- to C-terminus: Protein SREK1IP1 (158 aa).

Disordered regions lie at residues 1 to 20 (MAAP…RCGY) and 45 to 158 (SSTS…SDTD). Residues 13 to 30 (AGCKRCGYPGHLTFECRN) form a CCHC-type zinc finger. The span at 59 to 79 (ALSKEKIFGSHSKGSQEDSRK) shows a compositional bias: basic and acidic residues. Composition is skewed to basic residues over residues 80-98 (EKHK…KKRS) and 111-140 (KKKK…KQKK). The span at 145–158 (SSSSDSSSESSDTD) shows a compositional bias: low complexity.

Possible splicing regulator involved in the control of cellular survival. This chain is Protein SREK1IP1 (srek1ip1), found in Danio rerio (Zebrafish).